Consider the following 641-residue polypeptide: ATP-dependent zinc metalloprotease FtsH (641 aa).

The Cytoplasmic portion of the chain corresponds to 1–16 (MNKQQKPKRSPLRPDY). The chain crosses the membrane as a helical span at residues 17–37 (LVIVIIILLAIGMYFFFTEMM). Residues 38-131 (APKVKQFDEF…VSFVPHVSVD (94 aa)) lie on the Extracellular side of the membrane. The chain crosses the membrane as a helical span at residues 132–152 (FWNIISTLLLIAAPIVLVVIM). At 153–641 (FRSMSSQSNK…EVEEDSKKSE (489 aa)) the chain is on the cytoplasmic side. 222–229 (GQPGTGKT) is a binding site for ATP. His444 contacts Zn(2+). The active site involves Glu445. Positions 448 and 520 each coordinate Zn(2+).

This sequence in the central section; belongs to the AAA ATPase family. In the C-terminal section; belongs to the peptidase M41 family. In terms of assembly, homohexamer. Zn(2+) serves as cofactor.

The protein localises to the cell membrane. Acts as a processive, ATP-dependent zinc metallopeptidase for both cytoplasmic and membrane proteins. Plays a role in the quality control of integral membrane proteins. This is ATP-dependent zinc metalloprotease FtsH from Acholeplasma laidlawii (strain PG-8A).